Consider the following 82-residue polypeptide: Large ribosomal subunit protein bL31B (82 aa).

It belongs to the bacterial ribosomal protein bL31 family. Type B subfamily. In terms of assembly, part of the 50S ribosomal subunit.

The chain is Large ribosomal subunit protein bL31B from Dichelobacter nodosus (strain VCS1703A).